We begin with the raw amino-acid sequence, 403 residues long: Chorismate synthase (403 aa).

Residues R40 and R46 each coordinate NADP(+). Residues 140–142 (RSS) and 261–262 (QA) each bind FMN. Residues 277–298 (RRGSEAHDEMVRTDEGVDRETN) show a composition bias toward basic and acidic residues. The tract at residues 277 to 307 (RRGSEAHDEMVRTDEGVDRETNRAGGLEGGM) is disordered. Residues G305, 320–324 (KPIST), and R346 contribute to the FMN site.

It belongs to the chorismate synthase family. In terms of assembly, homotetramer. FMNH2 serves as cofactor.

It catalyses the reaction 5-O-(1-carboxyvinyl)-3-phosphoshikimate = chorismate + phosphate. Its pathway is metabolic intermediate biosynthesis; chorismate biosynthesis; chorismate from D-erythrose 4-phosphate and phosphoenolpyruvate: step 7/7. In terms of biological role, catalyzes the anti-1,4-elimination of the C-3 phosphate and the C-6 proR hydrogen from 5-enolpyruvylshikimate-3-phosphate (EPSP) to yield chorismate, which is the branch point compound that serves as the starting substrate for the three terminal pathways of aromatic amino acid biosynthesis. This reaction introduces a second double bond into the aromatic ring system. This chain is Chorismate synthase, found in Corynebacterium aurimucosum (strain ATCC 700975 / DSM 44827 / CIP 107346 / CN-1) (Corynebacterium nigricans).